Consider the following 407-residue polypeptide: UDP-N-acetylglucosamine--N-acetylmuramyl-(pentapeptide) pyrophosphoryl-undecaprenol N-acetylglucosamine transferase (407 aa).

Residues 1–21 form a disordered region; sequence MNNSVREPTRGRRGSPPVADA. UDP-N-acetyl-alpha-D-glucosamine is bound by residues 38–40, N157, S228, and Q324; that span reads TAG.

This sequence belongs to the glycosyltransferase 28 family. MurG subfamily.

Its subcellular location is the cell membrane. It carries out the reaction di-trans,octa-cis-undecaprenyl diphospho-N-acetyl-alpha-D-muramoyl-L-alanyl-D-glutamyl-meso-2,6-diaminopimeloyl-D-alanyl-D-alanine + UDP-N-acetyl-alpha-D-glucosamine = di-trans,octa-cis-undecaprenyl diphospho-[N-acetyl-alpha-D-glucosaminyl-(1-&gt;4)]-N-acetyl-alpha-D-muramoyl-L-alanyl-D-glutamyl-meso-2,6-diaminopimeloyl-D-alanyl-D-alanine + UDP + H(+). The protein operates within cell wall biogenesis; peptidoglycan biosynthesis. In terms of biological role, cell wall formation. Catalyzes the transfer of a GlcNAc subunit on undecaprenyl-pyrophosphoryl-MurNAc-pentapeptide (lipid intermediate I) to form undecaprenyl-pyrophosphoryl-MurNAc-(pentapeptide)GlcNAc (lipid intermediate II). The protein is UDP-N-acetylglucosamine--N-acetylmuramyl-(pentapeptide) pyrophosphoryl-undecaprenol N-acetylglucosamine transferase of Mycobacterium leprae (strain TN).